The following is a 115-amino-acid chain: Ribonuclease P protein component (115 aa).

The protein belongs to the RnpA family. In terms of assembly, consists of a catalytic RNA component (M1 or rnpB) and a protein subunit.

It carries out the reaction Endonucleolytic cleavage of RNA, removing 5'-extranucleotides from tRNA precursor.. Functionally, RNaseP catalyzes the removal of the 5'-leader sequence from pre-tRNA to produce the mature 5'-terminus. It can also cleave other RNA substrates such as 4.5S RNA. The protein component plays an auxiliary but essential role in vivo by binding to the 5'-leader sequence and broadening the substrate specificity of the ribozyme. The polypeptide is Ribonuclease P protein component (Blochmanniella pennsylvanica (strain BPEN)).